We begin with the raw amino-acid sequence, 367 residues long: tRNA-specific 2-thiouridylase MnmA (367 aa).

ATP contacts are provided by residues 12–19 (GMSGGVDS) and Met-38. Residues 98-100 (NPD) are interaction with target base in tRNA. The active-site Nucleophile is the Cys-103. Cysteines 103 and 200 form a disulfide. Gly-128 contacts ATP. The tract at residues 150-152 (KDQ) is interaction with tRNA. Cys-200 acts as the Cysteine persulfide intermediate in catalysis. Positions 312-313 (RY) are interaction with tRNA.

Belongs to the MnmA/TRMU family. Interacts with TusE.

The protein resides in the cytoplasm. The catalysed reaction is S-sulfanyl-L-cysteinyl-[protein] + uridine(34) in tRNA + AH2 + ATP = 2-thiouridine(34) in tRNA + L-cysteinyl-[protein] + A + AMP + diphosphate + H(+). Its function is as follows. Catalyzes the 2-thiolation of uridine at the wobble position (U34) of tRNA(Lys), tRNA(Glu) and tRNA(Gln), leading to the formation of s(2)U34, the first step of tRNA-mnm(5)s(2)U34 synthesis. Sulfur is provided by IscS, via a sulfur-relay system. Binds ATP and its substrate tRNAs. The polypeptide is tRNA-specific 2-thiouridylase MnmA (Photorhabdus laumondii subsp. laumondii (strain DSM 15139 / CIP 105565 / TT01) (Photorhabdus luminescens subsp. laumondii)).